A 233-amino-acid chain; its full sequence is Large ribosomal subunit protein uL1 (233 aa).

The protein belongs to the universal ribosomal protein uL1 family. Part of the 50S ribosomal subunit.

Functionally, binds directly to 23S rRNA. The L1 stalk is quite mobile in the ribosome, and is involved in E site tRNA release. Its function is as follows. Protein L1 is also a translational repressor protein, it controls the translation of the L11 operon by binding to its mRNA. The protein is Large ribosomal subunit protein uL1 of Shewanella piezotolerans (strain WP3 / JCM 13877).